The primary structure comprises 141 residues: Chorion protein S16 (141 aa).

Residues 1 to 22 (MSANNMRLLCLLLACYISAIVA) form the signal peptide.

This sequence belongs to the chorion protein S16 family.

The protein localises to the secreted. Functionally, chorion membrane (egg shell) protein; plays a role in protecting the egg from the environment. In Drosophila subobscura (Fruit fly), this protein is Chorion protein S16 (Cp16).